Here is a 119-residue protein sequence, read N- to C-terminus: Glucitol operon activator protein (119 aa).

The H-T-H motif DNA-binding region spans 23–29 (QISRFNR).

Functionally, positive regulator for glucitol operon expression. The chain is Glucitol operon activator protein (gutM) from Escherichia coli (strain K12).